Consider the following 367-residue polypeptide: TATA-box-binding protein-like (367 aa).

The disordered stretch occupies residues 1–26 (MKKQSKTHKVDYKYYNSGSKTSRNRN). Over residues 16 to 26 (NSGSKTSRNRN) the composition is skewed to polar residues.

The protein belongs to the TBP family.

This chain is TATA-box-binding protein-like, found in Acanthamoeba polyphaga (Amoeba).